The primary structure comprises 268 residues: MSSEQLQADQVPTKAGIAYKVRNMAFFYGTKKALDNISVDLPAKSVTAIIGPSGCGKSTFIKALNRIAEAETKVRIDGQIELFGQNIYDPKVNITRLRRRVGMVFQRPNPFPMTIYDNITYGPRVFGFKGNYDEIVETSLRRAALWNEVKDKVKTSALGLSGGQQQRLCIARSLAVNPDVLLMDEPCSALDPIATLRIEELIETLRDQFTIIIVTHNMQQAGRVSQNTLFFNTDESRIGQLVENGPTKEIFFSPKDKRTEDYISGRFG.

One can recognise an ABC transporter domain in the interval 19–263 (YKVRNMAFFY…PKDKRTEDYI (245 aa)). 51 to 58 (GPSGCGKS) lines the ATP pocket.

Belongs to the ABC transporter superfamily. Phosphate importer (TC 3.A.1.7) family. In terms of assembly, the complex is composed of two ATP-binding proteins (PstB), two transmembrane proteins (PstC and PstA) and a solute-binding protein (PstS).

Its subcellular location is the cell inner membrane. It catalyses the reaction phosphate(out) + ATP + H2O = ADP + 2 phosphate(in) + H(+). Part of the ABC transporter complex PstSACB involved in phosphate import. Responsible for energy coupling to the transport system. The protein is Phosphate import ATP-binding protein PstB 2 of Gloeobacter violaceus (strain ATCC 29082 / PCC 7421).